The following is a 133-amino-acid chain: MTLNLCVLTPNRIVWDSEVKEIILSTNTGQIGVLPNHAPIATAVDIGILRIRLNDQWLTMALMGGFARIGNNEITILVNDAEKGSDIDPQEAQETLELAEANLRKAEGKRQTIEANLALRRARTRVEAINAIS.

The protein belongs to the ATPase epsilon chain family. F-type ATPases have 2 components, CF(1) - the catalytic core - and CF(0) - the membrane proton channel. CF(1) has five subunits: alpha(3), beta(3), gamma(1), delta(1), epsilon(1). CF(0) has three main subunits: a, b and c.

Its subcellular location is the plastid. It localises to the chloroplast thylakoid membrane. Produces ATP from ADP in the presence of a proton gradient across the membrane. In Eucalyptus globulus subsp. globulus (Tasmanian blue gum), this protein is ATP synthase epsilon chain, chloroplastic.